We begin with the raw amino-acid sequence, 386 residues long: Homeobox protein Hox-A13 (386 aa).

Positions 320 to 379 (GRKKRVPYTKVQLKELEREYATNKFITKDKRRRISATTNLSERQVTIWFQNRRVKEKKVI) form a DNA-binding region, homeobox.

It belongs to the Abd-B homeobox family. Binds DNA as a homodimer. Interacts with MEIS1, MEIS2 and MEIS3.

It is found in the nucleus. Its function is as follows. Sequence-specific, AT-rich binding transcription factor which is part of a developmental regulatory system that provides cells with specific positional identities on the anterior-posterior axis. The sequence is that of Homeobox protein Hox-A13 (Hoxa13) from Mus musculus (Mouse).